Reading from the N-terminus, the 361-residue chain is Flagellar P-ring protein (361 aa).

The N-terminal stretch at 1–18 is a signal peptide; sequence MRKFTILLMLLLASSAQA.

The protein belongs to the FlgI family. As to quaternary structure, the basal body constitutes a major portion of the flagellar organelle and consists of four rings (L,P,S, and M) mounted on a central rod.

The protein localises to the periplasm. Its subcellular location is the bacterial flagellum basal body. Its function is as follows. Assembles around the rod to form the L-ring and probably protects the motor/basal body from shearing forces during rotation. This is Flagellar P-ring protein from Vibrio cholerae serotype O1 (strain ATCC 39541 / Classical Ogawa 395 / O395).